Reading from the N-terminus, the 351-residue chain is GTPase Obg (351 aa).

The 159-residue stretch at 1-159 (MKFLDQAKVY…RWIWLRLKLI (159 aa)) folds into the Obg domain. An OBG-type G domain is found at 160–328 (ADVGLVGLPN…LCGSAWDIVL (169 aa)). GTP-binding positions include 166–173 (GLPNAGKS), 191–195 (FTTLY), 213–216 (DIPG), 280–283 (NKID), and 309–311 (SGV). Residues Ser173 and Thr193 each coordinate Mg(2+).

This sequence belongs to the TRAFAC class OBG-HflX-like GTPase superfamily. OBG GTPase family. Monomer. The cofactor is Mg(2+).

The protein resides in the cytoplasm. Its function is as follows. An essential GTPase which binds GTP, GDP and possibly (p)ppGpp with moderate affinity, with high nucleotide exchange rates and a fairly low GTP hydrolysis rate. Plays a role in control of the cell cycle, stress response, ribosome biogenesis and in those bacteria that undergo differentiation, in morphogenesis control. The chain is GTPase Obg from Maricaulis maris (strain MCS10) (Caulobacter maris).